Consider the following 313-residue polypeptide: PGR5-like protein 1B, chloroplastic (313 aa).

A chloroplast-targeting transit peptide spans 1-49 (MAFTLTIPRFSAISRKPITCSSSRTQCPAPFTHGRSISLRRRLTLLPLK). At Ala50 the chain carries N-acetylalanine. Residues 50-187 (ASTDQSGQVG…KVYSDLAIDY (138 aa)) are Stromal-facing. Cys71 and Cys172 are joined by a disulfide. Residues 188 to 208 (FKMFLLNVPATVVALGLFFFL) form a helical membrane-spanning segment. The Lumenal, thylakoid portion of the chain corresponds to 209–225 (DDITGFEITYLLELPEP). Residues 226–246 (FSFIFTWFAAVPAIVYLALSL) form a helical membrane-spanning segment. The Stromal portion of the chain corresponds to 247-313 (TKLILKDFLI…LITLPEGGKA (67 aa)).

It belongs to the PGR5 family. Homodimer and heterodimer with PGR5. Interacts with PGR5, FD2, psaD1, LFNR1 and LFNR2. Also interacts with petC and a Fe-containing cofactor (FCC). In terms of processing, disulfide bonds; Cys-289 and Cys-292 are probably involved in the formation of disulfide bridges with 'Cys-11' and 'Cys-105' of PGR5 while Cys-261 and Cys-264 are probably involved in the binding of a Fe-containing cofactor (FCC).

The protein localises to the plastid. Its subcellular location is the chloroplast thylakoid membrane. With respect to regulation, inhibited by antimycin A. Ferredoxin-plastoquinone reductase involved in cyclic electron flow (CEF) around photosystem I. The homodimer is probably not involved in CEF. The polypeptide is PGR5-like protein 1B, chloroplastic (PGRL1B) (Arabidopsis thaliana (Mouse-ear cress)).